The sequence spans 622 residues: Polyprotein p69 (622 aa).

Residues 1–248 (MSCLRKPSQS…AARDPLARIG (248 aa)) enclose the Peptidase C7 domain. Residues Cys-162 and His-215 each act as for papain-like protease p29 activity in the active site.

Post-translationally, autocatalytically processed.

In terms of biological role, P40 protein is involved in reduction of conidiation of the host. Not necessary for replication. Also involved in reduction of orange pigmentation of the host. Functionally, cysteine protease of the peptidase family C7 that contributes to hypovirulence-associated traits like the reduction in conidiation and laccase activity, but not to virulence attenuation. Acts as a suppressor of RNA-mediated gene silencing, also known as post-transcriptional gene silencing (PTGS), a mechanism of viral defense that limits the accumulation of viral RNAs. Enhances viral dsRNA accumulation and virus transmission. Also involved in the reduction in orange pigmentation of the host, an effect independent of the intrinsic protease activity. This chain is Polyprotein p69, found in Cryphonectria hypovirus 1 (strain Euro7) (CHV-1/Euro7).